Consider the following 34-residue polypeptide: Protamine-Z1/Z2 (34 aa).

Positions 1-34 (PRRRRRSSRPVRRRRRYRRSTVARRRRRVVRRRR) are disordered.

As to expression, testis.

The protein resides in the nucleus. Its subcellular location is the chromosome. In terms of biological role, protamines substitute for histones in the chromatin of sperm during the haploid phase of spermatogenesis. They compact sperm DNA into a highly condensed, stable and inactive complex. This Thunnus thynnus (Atlantic bluefin tuna) protein is Protamine-Z1/Z2.